The sequence spans 447 residues: Argininosuccinate synthase (447 aa).

ATP-binding positions include 17-25 (AFSGGLDTS) and A43. Residue Y99 coordinates L-citrulline. Positions 129 and 131 each coordinate ATP. T131, N135, and D136 together coordinate L-aspartate. Position 135 (N135) interacts with L-citrulline. D136 is a binding site for ATP. 2 residues coordinate L-citrulline: R139 and S192. D194 lines the ATP pocket. Residues T201, E203, and E280 each contribute to the L-citrulline site.

It belongs to the argininosuccinate synthase family. Type 2 subfamily. As to quaternary structure, homotetramer.

Its subcellular location is the cytoplasm. The catalysed reaction is L-citrulline + L-aspartate + ATP = 2-(N(omega)-L-arginino)succinate + AMP + diphosphate + H(+). The protein operates within amino-acid biosynthesis; L-arginine biosynthesis; L-arginine from L-ornithine and carbamoyl phosphate: step 2/3. This Salmonella heidelberg (strain SL476) protein is Argininosuccinate synthase.